A 632-amino-acid polypeptide reads, in one-letter code: SH2B adapter protein 2 (632 aa).

A Phosphotyrosine modification is found at Tyr52. Ser141 carries the post-translational modification Phosphoserine. The 114-residue stretch at 193-306 (DIQREGALRF…WVADIQGCVD (114 aa)) folds into the PH domain. Residue Ser310 is modified to Phosphoserine. The segment at 381–409 (TLESPGGSGSDSNNTGEQGAETDPEAEPE) is disordered. Positions 400 to 409 (AETDPEAEPE) are enriched in acidic residues. The region spanning 417–515 (WFHGTLSRVK…SADITLRSYV (99 aa)) is the SH2 domain. Disordered regions lie at residues 516-537 (RAQD…SPAC) and 558-632 (ASPS…YSFY). Residues 519–532 (DPPPEPGPTPPAAP) are compositionally biased toward pro residues. Composition is skewed to low complexity over residues 558–579 (ASPS…AASG) and 604–626 (EAVA…RAVE). A Phosphotyrosine modification is found at Tyr629.

The protein belongs to the SH2B adapter family. In terms of assembly, homodimer. Interacts with KIT/c-KIT, SHC1, EPOR, PDGFR, VAV1 and VAV3. Interacts (via N-terminal region) with SHC1. Interacts (via the phosphorylated C-terminus) with GRB2. Interacts (via its SH2 domain) with EPOR, INSR and KIT. Interacts with GRB2 after B-cell antigen receptor stimulation. Interacts (via PH domain) with VAV3. Interacts with NTRK1, NTRK2 and NTRK3 (phosphorylated); after stimulation of the receptor by its extracellular ligand and subsequent autophosphorylation of the receptor. Binds INSR, GRB2, ASB6 and CAP. Insulin stimulation leads to dissociation of CAP. Binds CBS only when SH2B2/APS has become phosphorylated. INSR binding does not depend on the phosphorylation of SH2B2/APS. Post-translationally, tyrosine phosphorylated by JAK2, KIT and other kinases activated by B-cell receptor in response to stimulation with cytokines, IL3, IL5, PDGF, IGF1, IGF2, CSF2/GM-CSF and cross-linking of the B-cell receptor complex. In terms of tissue distribution, expressed in spleen, prostate, testis, uterus, small intestine and skeletal muscle. Among hematopoietic cell lines, expressed exclusively in B-cells. Not expressed in most tumor cell lines.

It is found in the cytoplasm. Its subcellular location is the cell membrane. Functionally, adapter protein for several members of the tyrosine kinase receptor family. Involved in multiple signaling pathways. May be involved in coupling from immunoreceptor to Ras signaling. Acts as a negative regulator of cytokine signaling in collaboration with CBL. Binds to EPOR and suppresses EPO-induced STAT5 activation, possibly through a masking effect on STAT5 docking sites in EPOR. Suppresses PDGF-induced mitogenesis. May induce cytoskeletal reorganization via interaction with VAV3. This is SH2B adapter protein 2 (SH2B2) from Homo sapiens (Human).